The primary structure comprises 381 residues: E3 ubiquitin-protein ligase RNF34 (381 aa).

The segment at 56 to 107 adopts an FYVE-type zinc-finger fold; sequence EGPNIVCKACGLSFSVFRKKHVCCDCKKDFCSLCSVSQENLRRCSTCHLLQE. The SAP 1 domain maps to 115–134; that stretch reads LMRLKVKDLRQYLLLRNVPT. Serine 169 carries the phosphoserine modification. Residues 216–261 are disordered; sequence LASANTDDEDGEEDDDDDDDDDDEDDDEQEENLEEQNPGLSKKKAR. Residues 221–249 show a composition bias toward acidic residues; that stretch reads TDDEDGEEDDDDDDDDDDEDDDEQEENLE. A phosphoserine mark is found at serine 263 and serine 265. The SAP 2 domain maps to 273-287; that stretch reads VEGMSVRQLKEILAR. The RING-type zinc finger occupies 334-369; sequence CRICMDAVIDCVLLECGHMVTCTKCGKRMSECPICR.

As to quaternary structure, interacts with CASP8 and CASP10. Interacts with p53/TP53; involved in p53/TP53 ubiquitination. Interacts (via RING-type zinc finger) with MDM2; the interaction stabilizes MDM2. Interacts (via RING-type zinc finger) with PPARGC1A. Interacts with NOD1. Post-translationally, proteolytically cleaved by caspases upon induction of apoptosis by TNF. In terms of processing, autoubiquitinated (in vitro). As to expression, ubiquitous. Detected in brain, cerebellum, midbrain, hippocampus, striatum, heart, lung, kidney, muscle, spleen and testis.

The protein localises to the cell membrane. It localises to the endomembrane system. Its subcellular location is the nucleus. It is found in the nucleus speckle. The protein resides in the cytoplasm. The protein localises to the cytosol. The enzyme catalyses S-ubiquitinyl-[E2 ubiquitin-conjugating enzyme]-L-cysteine + [acceptor protein]-L-lysine = [E2 ubiquitin-conjugating enzyme]-L-cysteine + N(6)-ubiquitinyl-[acceptor protein]-L-lysine.. It functions in the pathway protein modification; protein ubiquitination. In terms of biological role, E3 ubiquitin-protein ligase that regulates several biological processes through the ubiquitin-mediated proteasomal degradation of various target proteins. Ubiquitinates the caspases CASP8 and CASP10, promoting their proteasomal degradation, to negatively regulate cell death downstream of death domain receptors in the extrinsic pathway of apoptosis. May mediate 'Lys-48'-linked polyubiquitination of RIPK1 and its subsequent proteasomal degradation thereby indirectly regulating the tumor necrosis factor-mediated signaling pathway. Negatively regulates p53/TP53 through its direct ubiquitination and targeting to proteasomal degradation. Indirectly, may also negatively regulate p53/TP53 through ubiquitination and degradation of SFN. Mediates PPARGC1A proteasomal degradation probably through ubiquitination thereby indirectly regulating the metabolism of brown fat cells. Possibly involved in innate immunity, through 'Lys-48'-linked polyubiquitination of NOD1 and its subsequent proteasomal degradation. The sequence is that of E3 ubiquitin-protein ligase RNF34 from Rattus norvegicus (Rat).